The chain runs to 234 residues: Leucyl/phenylalanyl-tRNA--protein transferase (234 aa).

This sequence belongs to the L/F-transferase family.

Its subcellular location is the cytoplasm. It catalyses the reaction N-terminal L-lysyl-[protein] + L-leucyl-tRNA(Leu) = N-terminal L-leucyl-L-lysyl-[protein] + tRNA(Leu) + H(+). It carries out the reaction N-terminal L-arginyl-[protein] + L-leucyl-tRNA(Leu) = N-terminal L-leucyl-L-arginyl-[protein] + tRNA(Leu) + H(+). The enzyme catalyses L-phenylalanyl-tRNA(Phe) + an N-terminal L-alpha-aminoacyl-[protein] = an N-terminal L-phenylalanyl-L-alpha-aminoacyl-[protein] + tRNA(Phe). In terms of biological role, functions in the N-end rule pathway of protein degradation where it conjugates Leu, Phe and, less efficiently, Met from aminoacyl-tRNAs to the N-termini of proteins containing an N-terminal arginine or lysine. This is Leucyl/phenylalanyl-tRNA--protein transferase from Escherichia coli O81 (strain ED1a).